The primary structure comprises 62 residues: Ponericin-W-like 32.2 (62 aa).

Residues 1–23 form the signal peptide; it reads MKCKKQLLVIFFAYFLVVNESEA. The propeptide occupies 49–62; the sequence is RALMKRDLEDIMDP.

It belongs to the non-disulfide-bridged peptide (NDBP) superfamily. Medium-length antimicrobial peptide (group 3) family. Ponericin-W subfamily. Expressed by the venom gland.

It localises to the secreted. The protein localises to the target cell membrane. In terms of biological role, antimicrobial peptide with potent activity against a range of Gram-positive and Gram-negative bacteria. Has high hemolytic activity against erythrocytes. May act by disrupting the integrity of the bacterial cell membrane. The sequence is that of Ponericin-W-like 32.2 from Lychas mucronatus (Chinese swimming scorpion).